The primary structure comprises 189 residues: Cell division protein SepF (189 aa).

The span at 152 to 163 (FQEEPSPSSVMN) shows a compositional bias: polar residues. The tract at residues 152 to 189 (FQEEPSPSSVMNKDNEGPVSESVMAPEPAWGASVPSAI) is disordered.

The protein belongs to the SepF family. As to quaternary structure, homodimer. Interacts with FtsZ.

The protein localises to the cytoplasm. Functionally, cell division protein that is part of the divisome complex and is recruited early to the Z-ring. Probably stimulates Z-ring formation, perhaps through the cross-linking of FtsZ protofilaments. Its function overlaps with FtsA. This is Cell division protein SepF from Prochlorococcus marinus (strain SARG / CCMP1375 / SS120).